A 312-amino-acid polypeptide reads, in one-letter code: Porphobilinogen deaminase (312 aa).

Cysteine 243 carries the post-translational modification S-(dipyrrolylmethanemethyl)cysteine.

The protein belongs to the HMBS family. As to quaternary structure, monomer. Dipyrromethane is required as a cofactor.

It catalyses the reaction 4 porphobilinogen + H2O = hydroxymethylbilane + 4 NH4(+). The protein operates within porphyrin-containing compound metabolism; protoporphyrin-IX biosynthesis; coproporphyrinogen-III from 5-aminolevulinate: step 2/4. Its function is as follows. Tetrapolymerization of the monopyrrole PBG into the hydroxymethylbilane pre-uroporphyrinogen in several discrete steps. This Vibrio vulnificus (strain CMCP6) protein is Porphobilinogen deaminase.